The following is a 416-amino-acid chain: E3 ubiquitin-protein ligase makorin-2 (416 aa).

2 C3H1-type zinc fingers span residues 2-29 (STKQ…HDLA) and 31-58 (SKPS…HTRP). A compositionally biased stretch (basic and acidic residues) spans 113–122 (NLSGMAERKT). The tract at residues 113–142 (NLSGMAERKTQPSMVSNPGSCSDPQPSPEM) is disordered. Residues 123 to 136 (QPSMVSNPGSCSDP) are compositionally biased toward polar residues. Position 139 is a phosphoserine (Ser139). The segment at 165 to 192 (SNEQQLCPYAAAGECRFGDACVYLHGEV) adopts a C3H1-type 3 zinc-finger fold. Residues 193 to 222 (CEICRLQVLHPFDPEQRKAHEKICMLTFEH) form a makorin-type Cys-His region. The segment at 238–292 (CSICMEVILEKASASERRFGILSNCNHTYCLSCIRQWRCAKQFENPIIKSCPECR) adopts an RING-type zinc-finger fold. The C3H1-type 4 zinc-finger motif lies at 321–350 (GMGKKACKYFEQGKGTCPFGSKCLYRHAYP).

Interacts with PDLIM2 (via LIM zinc-binding domain). Interacts with RELA. As to expression, expressed in sperm, with significantly reduced expression in sperm of patients with oligoasthenoteratozoospermia (at protein level). Widely expressed with expression in testis, ovary, small intestine, colon, peripheral blood leukocytes, fetal liver, bone marrow, thymus, lymph node and spleen.

The protein localises to the cytoplasm. It localises to the nucleus. It catalyses the reaction S-ubiquitinyl-[E2 ubiquitin-conjugating enzyme]-L-cysteine + [acceptor protein]-L-lysine = [E2 ubiquitin-conjugating enzyme]-L-cysteine + N(6)-ubiquitinyl-[acceptor protein]-L-lysine.. The protein operates within protein modification; protein ubiquitination. E3 ubiquitin ligase catalyzing the covalent attachment of ubiquitin moieties onto substrate proteins. Promotes the polyubiquitination and proteasome-dependent degradation of RELA/p65, thereby suppressing RELA-mediated NF-kappaB transactivation and negatively regulating inflammatory responses. Plays a role in the regulation of spermiation and in male fertility. The protein is E3 ubiquitin-protein ligase makorin-2 (MKRN2) of Homo sapiens (Human).